Here is a 459-residue protein sequence, read N- to C-terminus: Exodeoxyribonuclease 7 large subunit (459 aa).

The protein belongs to the XseA family. As to quaternary structure, heterooligomer composed of large and small subunits.

Its subcellular location is the cytoplasm. The catalysed reaction is Exonucleolytic cleavage in either 5'- to 3'- or 3'- to 5'-direction to yield nucleoside 5'-phosphates.. In terms of biological role, bidirectionally degrades single-stranded DNA into large acid-insoluble oligonucleotides, which are then degraded further into small acid-soluble oligonucleotides. This is Exodeoxyribonuclease 7 large subunit from Yersinia pseudotuberculosis serotype O:3 (strain YPIII).